The sequence spans 300 residues: Ribosomal protein bS6--L-glutamate ligase (300 aa).

Positions 104 to 287 constitute an ATP-grasp domain; sequence MQLLARQGID…IAGKMIRWIE (184 aa). ATP contacts are provided by residues lysine 141, 178 to 179, aspartate 187, and 211 to 213; these read EY and RSN. Aspartate 248, glutamate 260, and asparagine 262 together coordinate Mg(2+). 3 residues coordinate Mn(2+): aspartate 248, glutamate 260, and asparagine 262.

Belongs to the RimK family. Mg(2+) is required as a cofactor. The cofactor is Mn(2+).

Functionally, an L-glutamate ligase that catalyzes the ATP-dependent post-translational addition of glutamate residues to the C-terminus of ribosomal protein bS6 (RpsF). Is also able to catalyze the synthesis of poly-alpha-glutamate in vitro, via ATP hydrolysis from unprotected glutamate as substrate. The number of glutamate residues added to either RpsF or to poly-alpha-glutamate changes with pH. The chain is Ribosomal protein bS6--L-glutamate ligase from Shigella dysenteriae serotype 1 (strain Sd197).